The chain runs to 360 residues: Biotin synthase 2 (360 aa).

Residues 53-280 enclose the Radical SAM core domain; the sequence is RRVKLNFLVN…TAEVRLSGGR (228 aa). Positions 68, 72, and 75 each coordinate [4Fe-4S] cluster. Positions 112, 145, 205, and 275 each coordinate [2Fe-2S] cluster.

It belongs to the radical SAM superfamily. Biotin synthase family. In terms of assembly, homodimer. The cofactor is [4Fe-4S] cluster. [2Fe-2S] cluster serves as cofactor.

It carries out the reaction (4R,5S)-dethiobiotin + (sulfur carrier)-SH + 2 reduced [2Fe-2S]-[ferredoxin] + 2 S-adenosyl-L-methionine = (sulfur carrier)-H + biotin + 2 5'-deoxyadenosine + 2 L-methionine + 2 oxidized [2Fe-2S]-[ferredoxin]. Its pathway is cofactor biosynthesis; biotin biosynthesis; biotin from 7,8-diaminononanoate: step 2/2. In terms of biological role, catalyzes the conversion of dethiobiotin (DTB) to biotin by the insertion of a sulfur atom into dethiobiotin via a radical-based mechanism. The sequence is that of Biotin synthase 2 from Frankia casuarinae (strain DSM 45818 / CECT 9043 / HFP020203 / CcI3).